The chain runs to 460 residues: tRNA modification GTPase MnmE (460 aa).

Residues Arg26, Glu88, and Arg127 each contribute to the (6S)-5-formyl-5,6,7,8-tetrahydrofolate site. One can recognise a TrmE-type G domain in the interval 222 to 381; the sequence is GLKVAIVGRP…LESAILSKVQ (160 aa). Asn232 contributes to the K(+) binding site. GTP contacts are provided by residues 232–237, 251–257, and 276–279; these read NVGKSS, TELPGTT, and DTAG. Ser236 provides a ligand contact to Mg(2+). 3 residues coordinate K(+): Thr251, Leu253, and Thr256. Thr257 lines the Mg(2+) pocket. Residue Lys460 coordinates (6S)-5-formyl-5,6,7,8-tetrahydrofolate.

Belongs to the TRAFAC class TrmE-Era-EngA-EngB-Septin-like GTPase superfamily. TrmE GTPase family. In terms of assembly, homodimer. Heterotetramer of two MnmE and two MnmG subunits. It depends on K(+) as a cofactor.

It localises to the cytoplasm. Its function is as follows. Exhibits a very high intrinsic GTPase hydrolysis rate. Involved in the addition of a carboxymethylaminomethyl (cmnm) group at the wobble position (U34) of certain tRNAs, forming tRNA-cmnm(5)s(2)U34. In Cyanothece sp. (strain PCC 7425 / ATCC 29141), this protein is tRNA modification GTPase MnmE.